Here is a 490-residue protein sequence, read N- to C-terminus: B3 domain-containing protein REM14 (490 aa).

DNA-binding regions (TF-B3) lie at residues 3-95 (NQHF…LGPS), 130-226 (CFSA…LPKG), and 236-333 (CFVA…LSNE). The disordered stretch occupies residues 343 to 367 (NEVESLSTDQESHEESSHNEKISRR). Basic and acidic residues predominate over residues 352 to 364 (QESHEESSHNEKI). The TF-B3 4 DNA-binding region spans 387 to 484 (FVTLNLTPYN…TSCVLKFCSK (98 aa)).

Its subcellular location is the nucleus. This Arabidopsis thaliana (Mouse-ear cress) protein is B3 domain-containing protein REM14 (REM14).